We begin with the raw amino-acid sequence, 572 residues long: Dihydroxy-acid dehydratase (572 aa).

C57 contributes to the [2Fe-2S] cluster binding site. A Mg(2+)-binding site is contributed by D89. Residue C130 participates in [2Fe-2S] cluster binding. Residues D131 and K132 each coordinate Mg(2+). K132 is modified (N6-carboxylysine). C202 is a [2Fe-2S] cluster binding site. A Mg(2+)-binding site is contributed by E453. S479 functions as the Proton acceptor in the catalytic mechanism.

This sequence belongs to the IlvD/Edd family. In terms of assembly, homodimer. The cofactor is [2Fe-2S] cluster. Requires Mg(2+) as cofactor.

It catalyses the reaction (2R)-2,3-dihydroxy-3-methylbutanoate = 3-methyl-2-oxobutanoate + H2O. The enzyme catalyses (2R,3R)-2,3-dihydroxy-3-methylpentanoate = (S)-3-methyl-2-oxopentanoate + H2O. It functions in the pathway amino-acid biosynthesis; L-isoleucine biosynthesis; L-isoleucine from 2-oxobutanoate: step 3/4. The protein operates within amino-acid biosynthesis; L-valine biosynthesis; L-valine from pyruvate: step 3/4. Functions in the biosynthesis of branched-chain amino acids. Catalyzes the dehydration of (2R,3R)-2,3-dihydroxy-3-methylpentanoate (2,3-dihydroxy-3-methylvalerate) into 2-oxo-3-methylpentanoate (2-oxo-3-methylvalerate) and of (2R)-2,3-dihydroxy-3-methylbutanoate (2,3-dihydroxyisovalerate) into 2-oxo-3-methylbutanoate (2-oxoisovalerate), the penultimate precursor to L-isoleucine and L-valine, respectively. The sequence is that of Dihydroxy-acid dehydratase from Streptococcus sanguinis (strain SK36).